Consider the following 552-residue polypeptide: Lon protease 2 (552 aa).

97–104 (GPPGVGKT) serves as a coordination point for ATP. In terms of domain architecture, Lon proteolytic spans 349–535 (EPQVGIVNGL…QEVLDEILVN (187 aa)). Catalysis depends on residues Ser-445 and Lys-488.

It belongs to the peptidase S16 family. As to quaternary structure, homohexamer. Organized in a ring with a central cavity.

It is found in the cytoplasm. The enzyme catalyses Hydrolysis of proteins in presence of ATP.. Functionally, ATP-dependent serine protease that mediates the selective degradation of mutant and abnormal proteins as well as certain short-lived regulatory proteins. Required for cellular homeostasis and for survival from DNA damage and developmental changes induced by stress. Degrades polypeptides processively to yield small peptide fragments that are 5 to 10 amino acids long. Binds to DNA in a double-stranded, site-specific manner. The protein is Lon protease 2 (lon2) of Bacillus subtilis (strain 168).